The sequence spans 860 residues: Leucine--tRNA ligase (860 aa).

A 'HIGH' region motif is present at residues 42–52 (PYPSGRLHMGH). The 'KMSKS' region signature appears at 619–623 (KMSKS). An ATP-binding site is contributed by K622.

Belongs to the class-I aminoacyl-tRNA synthetase family.

The protein resides in the cytoplasm. It catalyses the reaction tRNA(Leu) + L-leucine + ATP = L-leucyl-tRNA(Leu) + AMP + diphosphate. The chain is Leucine--tRNA ligase from Escherichia coli O7:K1 (strain IAI39 / ExPEC).